We begin with the raw amino-acid sequence, 372 residues long: GTPase Obg (372 aa).

One can recognise an Obg domain in the interval 1–159; it reads MKFIDEARIE…RMLKLELKVL (159 aa). Residues 128–147 are disordered; sequence LHFKSSTNRAPRQKTDGKPG. One can recognise an OBG-type G domain in the interval 160–334; sequence ADVGLLGMPN…LVYAIHDYLV (175 aa). GTP is bound by residues 166–173, 191–195, 213–216, 284–287, and 315–317; these read GMPNAGKS, FTTLA, DIPG, NKLD, and SAL. Mg(2+) contacts are provided by S173 and T193.

It belongs to the TRAFAC class OBG-HflX-like GTPase superfamily. OBG GTPase family. As to quaternary structure, monomer. The cofactor is Mg(2+).

It is found in the cytoplasm. An essential GTPase which binds GTP, GDP and possibly (p)ppGpp with moderate affinity, with high nucleotide exchange rates and a fairly low GTP hydrolysis rate. Plays a role in control of the cell cycle, stress response, ribosome biogenesis and in those bacteria that undergo differentiation, in morphogenesis control. This is GTPase Obg from Burkholderia mallei (strain NCTC 10247).